Reading from the N-terminus, the 325-residue chain is Tagatose 1,6-diphosphate aldolase 1 (325 aa).

The protein belongs to the aldolase LacD family.

It carries out the reaction D-tagatofuranose 1,6-bisphosphate = D-glyceraldehyde 3-phosphate + dihydroxyacetone phosphate. It participates in carbohydrate metabolism; D-tagatose 6-phosphate degradation; D-glyceraldehyde 3-phosphate and glycerone phosphate from D-tagatose 6-phosphate: step 2/2. This is Tagatose 1,6-diphosphate aldolase 1 (lacD1) from Streptococcus pyogenes serotype M1.